The following is a 402-amino-acid chain: Arginine biosynthesis bifunctional protein ArgJ (402 aa).

Thr152, Lys178, Thr189, Glu275, Asn397, and Thr402 together coordinate substrate. Thr189 acts as the Nucleophile in catalysis.

This sequence belongs to the ArgJ family. As to quaternary structure, heterotetramer of two alpha and two beta chains.

Its subcellular location is the cytoplasm. It catalyses the reaction N(2)-acetyl-L-ornithine + L-glutamate = N-acetyl-L-glutamate + L-ornithine. It carries out the reaction L-glutamate + acetyl-CoA = N-acetyl-L-glutamate + CoA + H(+). Its pathway is amino-acid biosynthesis; L-arginine biosynthesis; L-ornithine and N-acetyl-L-glutamate from L-glutamate and N(2)-acetyl-L-ornithine (cyclic): step 1/1. The protein operates within amino-acid biosynthesis; L-arginine biosynthesis; N(2)-acetyl-L-ornithine from L-glutamate: step 1/4. Functionally, catalyzes two activities which are involved in the cyclic version of arginine biosynthesis: the synthesis of N-acetylglutamate from glutamate and acetyl-CoA as the acetyl donor, and of ornithine by transacetylation between N(2)-acetylornithine and glutamate. The chain is Arginine biosynthesis bifunctional protein ArgJ from Lactiplantibacillus plantarum (strain ATCC BAA-793 / NCIMB 8826 / WCFS1) (Lactobacillus plantarum).